The chain runs to 230 residues: Extracellular ribonuclease LE (230 aa).

The signal sequence occupies residues 1–25 (MASNSAFSLFLILLIITQCLSVLNA). Residue glutamine 37 participates in RNA binding. 5 disulfides stabilise this stretch: cysteine 43–cysteine 49, cysteine 50–cysteine 106, cysteine 79–cysteine 125, cysteine 186–cysteine 221, and cysteine 202–cysteine 213. RNA-binding positions include histidine 64, phenylalanine 114, 117–118 (HE), and 121–122 (KH). Histidine 64 acts as the Proton donor in catalysis. The active site involves glutamate 118. The active-site Proton acceptor is histidine 122.

This sequence belongs to the RNase T2 family.

Its subcellular location is the secreted. It is found in the extracellular space. The protein resides in the cell wall. It carries out the reaction a ribonucleotidyl-ribonucleotide-RNA + H2O = a 3'-end 3'-phospho-ribonucleotide-RNA + a 5'-end dephospho-ribonucleoside-RNA + H(+). Functionally, probably involved in plant phosphate-starvation rescue system. The polypeptide is Extracellular ribonuclease LE (Solanum lycopersicum (Tomato)).